The chain runs to 117 residues: MSKQPRKQRKYIYEAPLHARRKMMSANLSRELREEYGRRSLPLRKGDKVEILRGDFRGHEGKVEKVDLKRYRVYVEGATIQKVDGTTVYFPLHPSNLRIVDLNLDDEKRIKILERKG.

The protein belongs to the universal ribosomal protein uL24 family. As to quaternary structure, part of the 50S ribosomal subunit.

Functionally, one of two assembly initiator proteins, it binds directly to the 5'-end of the 23S rRNA, where it nucleates assembly of the 50S subunit. Located at the polypeptide exit tunnel on the outside of the subunit. In Methanothermobacter thermautotrophicus (strain ATCC 29096 / DSM 1053 / JCM 10044 / NBRC 100330 / Delta H) (Methanobacterium thermoautotrophicum), this protein is Large ribosomal subunit protein uL24.